The sequence spans 109 residues: Cyclic di-AMP receptor A (109 aa).

Residues Thr-21, Phe-25, Thr-28, Gly-35, Phe-36, Leu-37, Asn-41, Gly-47, Glu-92, and Gly-94 each contribute to the 3',3'-c-di-AMP site.

In terms of assembly, homotrimer.

It localises to the cytoplasm. Functionally, binds cyclic di-AMP (c-di-AMP) and is probably involved in c-di-AMP-mediated signaling pathways. In vitro, can also bind cyclic GMP-AMP (3'3'-cGAMP), with lower affinity, but not c-di-GMP or 2'3'-cGAMP. This Bacillus subtilis (strain 168) protein is Cyclic di-AMP receptor A.